The chain runs to 1989 residues: Zinc finger C3H1 domain-containing protein (1989 aa).

4 disordered regions span residues 1 to 133 (MATA…RPSF), 148 to 218 (GRPY…SKNE), 251 to 290 (SSKEENVQEDPKTLNFEDQTSTDNVSITKDSSKEVAPEEK), and 310 to 365 (LPGD…LGED). Alanine 2 bears the N-acetylalanine mark. Phosphoserine is present on residues serine 15, serine 28, and serine 34. Residues 20 to 32 (GELEDGEISDDDN) are compositionally biased toward acidic residues. Over residues 33 to 44 (NSQIRSRSSSSS) the composition is skewed to low complexity. Positions 62–72 (RGGGSGGGGGS) are enriched in gly residues. Low complexity-rich tracts occupy residues 114–132 (PPSVRMPSSSLSESSPRPS), 183–192 (GFSSSQSWRE), and 201–210 (KSFGRSPSRK). Serine 128 carries the phosphoserine modification. The stretch at 219–259 (NCVEETFEDLLLKYKQIQLELECINKDEKLALSSKEENVQE) forms a coiled coil. Serine 251 carries the phosphoserine modification. A compositionally biased stretch (basic and acidic residues) spans 251–262 (SSKEENVQEDPK). The span at 266-279 (FEDQTSTDNVSITK) shows a compositional bias: polar residues. Positions 280–290 (DSSKEVAPEEK) are enriched in basic and acidic residues. The segment covering 330–340 (KSDTTDSSQGL) has biased composition (polar residues). Residues serine 352 and serine 383 each carry the phosphoserine modification. The stretch at 358-389 (SEKKLGEDEEELSELQLRLLALQSASKKWQQK) forms a coiled coil. Disordered regions lie at residues 385 to 671 (KWQQ…SNLS) and 711 to 770 (LNDS…PEAL). Residues 392–402 (QVMKESKEKLT) are compositionally biased toward basic and acidic residues. A compositionally biased stretch (basic residues) spans 430–440 (ALRKQQTKAWK). The stretch at 432–487 (RKQQTKAWKKLQQQKEQERQKEEDQRKQAEEEERRKREEEIRKIRDLSNQEEQYNR) forms a coiled coil. 2 stretches are compositionally biased toward basic and acidic residues: residues 444-479 (QQKEQERQKEEDQRKQAEEEERRKREEEIRKIRDLS) and 501-515 (KSSDPDLRRSLDKQP). The segment covering 527–537 (NYEEVAMDTDS) has biased composition (acidic residues). Residues 574–583 (VSSLPPLSQP) are compositionally biased toward low complexity. Over residues 594–616 (PLPPLPPLPPLPPEDPEQPPKPP) the composition is skewed to pro residues. Over residues 647-671 (TSSNSDPPSPPVLNNSHPVPRSNLS) the composition is skewed to polar residues. Residues serine 662, serine 714, serine 717, and serine 719 each carry the phosphoserine modification. Over residues 755–770 (PKSEKENDPLRTPEAL) the composition is skewed to basic and acidic residues. A Phosphothreonine modification is found at threonine 766. Phosphoserine is present on residues serine 805 and serine 809. The stretch at 847–909 (LKNLVQQEAK…QQRVTIKKAL (63 aa)) forms a coiled coil. Phosphoserine occurs at positions 948, 949, and 953. Residues 965–989 (EKRRLQKLEYEYALKIQKLKEARAL) are a coiled coil. Residues serine 998 and serine 1046 each carry the phosphoserine modification. The segment at 1185–1206 (FCRFDLTGTCNDDDCQWQHIQD) adopts a C3H1-type zinc-finger fold. Phosphoserine is present on residues serine 1301, serine 1303, and serine 1304. TPR repeat units lie at residues 1361 to 1400 (VQLWLKLAYKYLNQNEGECSESLDSALNVLARALENNKDN), 1401 to 1434 (PEIWCHYLRLFSKRGTKDEVQEMCETAVEYAPDY), 1438 to 1471 (WTFLHLESTFEEKDYVCERMLEFLMGAAKQETSN), 1478 to 1511 (LEALLFRVQLHIFTGRCQSALAILQNALKSANDG), 1602 to 1635 (LPLYTNMIALHQLLERYEAAMELCKSLLESCPIN), 1636 to 1669 (CQLLEALVALYLQTNQHDKARAVWLTAFEKNPQN), and 1745 to 1778 (PYLWLIYCLCHPLQSSIKETVEAYEAALGVAMRC).

In terms of assembly, component of the poly(A) tail exosome targeting (PAXT) complex made of accessory factors, such as PABPN1, ZFC3H1 and MTREX, and which directs a subset of long and polyadenylated poly(A) RNAs for exosomal degradation. Co-localizes with component of the CBC-ARS2 (CBCA) complex. Binds to RNA exosome components. Interacts with NCBP1/CBP80, ZC3H18, MTREX and PABPN1 in a RNase-insensitive manner, and with PABPC4, PABPC1 and ZC3H14 in a RNase-sensitive manner.

The protein resides in the nucleus. Subunit of the trimeric poly(A) tail exosome targeting (PAXT) complex, a complex that directs a subset of long and polyadenylated poly(A) RNAs for exosomal degradation. The RNA exosome is fundamental for the degradation of RNA in eukaryotic nuclei. Substrate targeting is facilitated by its cofactor MTREX, which links to RNA-binding protein adapters. In Homo sapiens (Human), this protein is Zinc finger C3H1 domain-containing protein (ZFC3H1).